The following is a 444-amino-acid chain: Type I restriction enzyme EcoDI specificity subunit (444 aa).

This sequence belongs to the type-I restriction system S methylase family. The type I restriction/modification system is composed of three polypeptides R, M and S; the restriction enzyme has stoichiometry R(2)M(2)S(1) while the methyltransferase is M(2)S(1).

The specificity (S) subunit of a type I restriction enzyme; this subunit dictates DNA sequence specificity. The M and S subunits together form a methyltransferase (MTase) that methylates two adenine residues of the sequence 5'-TTAN(7)GTCY-3'. In the presence of the R subunit the complex can also act as an endonuclease, binding to the same target sequence but cutting the DNA some distance from this site. Whether the DNA is cut or modified depends on the methylation state of the target sequence. When the target site is unmodified, the DNA is cut. When the target site is hemimethylated, the complex acts as a maintenance MTase modifying the DNA so that both strands become methylated. After locating a non-methylated recognition site, the enzyme complex serves as a molecular motor that translocates DNA in an ATP-dependent manner until a collision occurs that triggers cleavage. The sequence is that of Type I restriction enzyme EcoDI specificity subunit from Escherichia coli.